The chain runs to 188 residues: Inosine triphosphate pyrophosphatase (188 aa).

Residue 11-16 (TGNKHK) participates in ITP binding. Glu-39 lines the Mg(2+) pocket. ITP contacts are provided by residues Lys-51, 67-68 (DT), Lys-84, 143-146 (FGWN), and 171-172 (HR).

It belongs to the HAM1 NTPase family. In terms of assembly, homodimer. The cofactor is Mg(2+). Requires Mn(2+) as cofactor.

The protein resides in the cytoplasm. The protein localises to the nucleus. The catalysed reaction is ITP + H2O = IMP + diphosphate + H(+). It catalyses the reaction dITP + H2O = dIMP + diphosphate + H(+). It carries out the reaction XTP + H2O = XMP + diphosphate + H(+). Pyrophosphatase that hydrolyzes non-canonical purine nucleotides such as inosine triphosphate (ITP), deoxyinosine triphosphate (dITP) or xanthosine 5'-triphosphate (XTP) to their respective monophosphate derivatives. The enzyme does not distinguish between the deoxy- and ribose forms. Probably excludes non-canonical purines from RNA and DNA precursor pools, thus preventing their incorporation into RNA and DNA and avoiding chromosomal lesions. The sequence is that of Inosine triphosphate pyrophosphatase from Schizosaccharomyces pombe (strain 972 / ATCC 24843) (Fission yeast).